The sequence spans 497 residues: Ankyrin repeat domain-containing protein 53 (497 aa).

The span at 1 to 10 (MRRPSRRRSK) shows a compositional bias: basic residues. Residues 1-65 (MRRPSRRRSK…VSSPNSESSQ (65 aa)) are disordered. Residues 12 to 27 (STPPRSHTTPRRTGPS) show a composition bias toward low complexity. Residues 28–39 (DSRRRPGTKEQP) show a composition bias toward basic and acidic residues. 3 ANK repeats span residues 110–140 (KGFTAIHFAAQKCQLSCLKVLIEEYKYPVDL), 144–177 (KGQTPLHLVIHKNNKSDILPCIDYLLKKGAAINS), and 181–210 (NGSTPLHLASCNGLLGCIKLLVQSGANVHA). Residues 239 to 264 (WKHDKKVLAQEMEKLRTLKEKLTILE) are a coiled coil.

Interacts with PSRC1; recruited by PSRC1 to the spindle during mitosis. Phosphorylated during mitosis.

Its subcellular location is the cytoplasm. The protein localises to the cytoskeleton. The protein resides in the spindle. It localises to the spindle pole. Required for normal progression through mitosis. Involved in chromosome alignment and cytokinesis via regulation of microtubules polymerization. This is Ankyrin repeat domain-containing protein 53 (Ankrd53) from Mus musculus (Mouse).